The primary structure comprises 113 residues: Endoribonuclease SymE (113 aa).

In terms of domain architecture, SpoVT-AbrB spans 29–74 (SRYPDYSRIPAITLKGQWLEAAGFATGTAVDVKVMEGCIVLTAQPA).

It belongs to the SymE family.

It is found in the cytoplasm. Functionally, involved in the degradation and recycling of damaged RNA. It is itself a target for degradation by the ATP-dependent protease Lon. This chain is Endoribonuclease SymE, found in Shigella flexneri serotype 5b (strain 8401).